Reading from the N-terminus, the 66-residue chain is Cysteine proteinase inhibitor (66 aa).

Positions 18-22 match the Secondary area of contact motif; sequence QVVAG.

It belongs to the cystatin family. Phytocystatin subfamily. In tubers of untreated plants. After ABA treatment or mechanical wounding is mostly accumulated in leaves, to a lesser extent in stems, but not in roots.

The chain is Cysteine proteinase inhibitor (CYS-PIN) from Solanum tuberosum (Potato).